The chain runs to 366 residues: D-alanine--D-alanine ligase (366 aa).

The ATP-grasp domain occupies 140 to 346 (KALFAQSDLP…YGELLSRLVD (207 aa)). An ATP-binding site is contributed by 173–228 (EDRLGYPCFVKPANMGSSVGISKATNRAELVAAFDDAVRYDRKLIVEKGINVREIE). Residues Asp299, Glu313, and Asn315 each contribute to the Mg(2+) site.

The protein belongs to the D-alanine--D-alanine ligase family. The cofactor is Mg(2+). Requires Mn(2+) as cofactor.

It is found in the cytoplasm. It carries out the reaction 2 D-alanine + ATP = D-alanyl-D-alanine + ADP + phosphate + H(+). The protein operates within cell wall biogenesis; peptidoglycan biosynthesis. Cell wall formation. In Heliobacterium modesticaldum (strain ATCC 51547 / Ice1), this protein is D-alanine--D-alanine ligase.